The chain runs to 240 residues: Ribonuclease 3 (240 aa).

In terms of domain architecture, RNase III spans 9–141 (VEELQKRLGV…LLAALYLDQG (133 aa)). Mg(2+) is bound at residue Glu54. Asp58 is a catalytic residue. The Mg(2+) site is built by Asp127 and Glu130. Residue Glu130 is part of the active site. The DRBM domain maps to 168–237 (DYKTALQEIV…ARKAYEKLVA (70 aa)).

It belongs to the ribonuclease III family. Homodimer. The cofactor is Mg(2+).

The protein resides in the cytoplasm. The catalysed reaction is Endonucleolytic cleavage to 5'-phosphomonoester.. Digests double-stranded RNA. Involved in the processing of primary rRNA transcript to yield the immediate precursors to the large and small rRNAs (23S and 16S). Processes some mRNAs, and tRNAs when they are encoded in the rRNA operon. Processes pre-crRNA and tracrRNA of type II CRISPR loci if present in the organism. This chain is Ribonuclease 3, found in Thermotoga neapolitana (strain ATCC 49049 / DSM 4359 / NBRC 107923 / NS-E).